The sequence spans 140 residues: Large ribosomal subunit protein uL16 (140 aa).

The protein belongs to the universal ribosomal protein uL16 family. As to quaternary structure, part of the 50S ribosomal subunit.

Its function is as follows. Binds 23S rRNA and is also seen to make contacts with the A and possibly P site tRNAs. The chain is Large ribosomal subunit protein uL16 from Amoebophilus asiaticus (strain 5a2).